The chain runs to 610 residues: Elongation factor 4 (610 aa).

The tr-type G domain maps to 11-193 (EKIRNFSIIA…QIVEKVPAPT (183 aa)). Residues 23 to 28 (DHGKST) and 140 to 143 (NKID) contribute to the GTP site.

It belongs to the TRAFAC class translation factor GTPase superfamily. Classic translation factor GTPase family. LepA subfamily.

It is found in the cell membrane. It catalyses the reaction GTP + H2O = GDP + phosphate + H(+). Functionally, required for accurate and efficient protein synthesis under certain stress conditions. May act as a fidelity factor of the translation reaction, by catalyzing a one-codon backward translocation of tRNAs on improperly translocated ribosomes. Back-translocation proceeds from a post-translocation (POST) complex to a pre-translocation (PRE) complex, thus giving elongation factor G a second chance to translocate the tRNAs correctly. Binds to ribosomes in a GTP-dependent manner. The chain is Elongation factor 4 from Streptococcus pyogenes serotype M49 (strain NZ131).